A 213-amino-acid polypeptide reads, in one-letter code: RNA chaperone ProQ (213 aa).

A disordered region spans residues 105 to 150 (ESQEKAKAKRAAQTPKAAPAGKAPAKKAPKKVAVPARKTERPAKAA). Residues 115-127 (AAQTPKAAPAGKA) are compositionally biased toward low complexity.

The protein belongs to the ProQ family.

It is found in the cytoplasm. In terms of biological role, RNA chaperone with significant RNA binding, RNA strand exchange and RNA duplexing activities. This is RNA chaperone ProQ from Shewanella oneidensis (strain ATCC 700550 / JCM 31522 / CIP 106686 / LMG 19005 / NCIMB 14063 / MR-1).